Consider the following 497-residue polypeptide: Serine/threonine-protein phosphatase 2A 56 kDa regulatory subunit beta isoform (497 aa).

Low complexity predominate over residues 1–19; sequence METKLPPASTPTSPSSPGL. Disordered regions lie at residues 1–55 and 473–497; these read METK…YQSN and QGTQ…GGQS. Residues serine 32, serine 35, serine 44, serine 46, serine 47, and serine 48 each carry the phosphoserine modification. The span at 34–45 shows a compositional bias: basic residues; sequence RSLRRARPRRSH.

The protein belongs to the phosphatase 2A regulatory subunit B56 family. In terms of assembly, component of the serine/threonine-protein phosphatase 2A complex (PP2A). This complex consists of a common heterodimeric core enzyme, composed of a 36 kDa catalytic subunit (subunit C) and a 65 kDa constant scaffold subunit (PR65 or subunit A), that associates with a variety of regulatory subunits. Proteins that associate with the core dimer include three families of regulatory subunits B (the R2/B/PR55/B55, R3/B''/PR72/PR130/PR59 and R5/B'/B56 families), the 48 kDa variable regulatory subunit, viral proteins, and cell signaling molecules. Interacts with SGO1. Interacts with AKT1. In terms of processing, ubiquitinated by CUL3-KLHL15 complex; this modification leads to proteasomal degradation.

It is found in the cytoplasm. As the regulatory component of the serine/threonine-protein phosphatase 2A (PP2A) holoenzyme, modulates substrate specificity, subcellular localization, and responsiveness to phosphorylation. The phosphorylated form mediates the interaction between PP2A and AKT1, leading to AKT1 dephosphorylation. This Mus musculus (Mouse) protein is Serine/threonine-protein phosphatase 2A 56 kDa regulatory subunit beta isoform (Ppp2r5b).